The primary structure comprises 262 residues: Polyamine aminopropyltransferase (262 aa).

The PABS domain occupies 1 to 249 (MWITQEITPY…DIHRAAFALP (249 aa)). N29 contacts S-methyl-5'-thioadenosine. D83 is a spermidine binding site. D155 serves as the catalytic Proton acceptor.

The protein belongs to the spermidine/spermine synthase family. In terms of assembly, homodimer or homotetramer.

It localises to the cytoplasm. It catalyses the reaction S-adenosyl 3-(methylsulfanyl)propylamine + putrescine = S-methyl-5'-thioadenosine + spermidine + H(+). Its pathway is amine and polyamine biosynthesis; spermidine biosynthesis; spermidine from putrescine: step 1/1. Functionally, catalyzes the irreversible transfer of a propylamine group from the amino donor S-adenosylmethioninamine (decarboxy-AdoMet) to putrescine (1,4-diaminobutane) to yield spermidine. The protein is Polyamine aminopropyltransferase of Helicobacter pylori (strain P12).